Reading from the N-terminus, the 377-residue chain is Chaperone protein DnaJ (377 aa).

The J domain occupies 5 to 70 (DYYEILGVER…EKRAAYDQYG (66 aa)). The segment at 134 to 212 (GITKDIQIQT…CHGDGRVHKT (79 aa)) adopts a CR-type zinc-finger fold. The Zn(2+) site is built by C147, C150, C164, C167, C186, C189, C200, and C203. CXXCXGXG motif repeat units lie at residues 147-154 (CDHCNGSG), 164-171 (CPTCHGHG), 186-193 (CPHCHGTG), and 200-207 (CKKCHGDG).

This sequence belongs to the DnaJ family. In terms of assembly, homodimer. It depends on Zn(2+) as a cofactor.

It is found in the cytoplasm. Functionally, participates actively in the response to hyperosmotic and heat shock by preventing the aggregation of stress-denatured proteins and by disaggregating proteins, also in an autonomous, DnaK-independent fashion. Unfolded proteins bind initially to DnaJ; upon interaction with the DnaJ-bound protein, DnaK hydrolyzes its bound ATP, resulting in the formation of a stable complex. GrpE releases ADP from DnaK; ATP binding to DnaK triggers the release of the substrate protein, thus completing the reaction cycle. Several rounds of ATP-dependent interactions between DnaJ, DnaK and GrpE are required for fully efficient folding. Also involved, together with DnaK and GrpE, in the DNA replication of plasmids through activation of initiation proteins. The sequence is that of Chaperone protein DnaJ from Actinobacillus succinogenes (strain ATCC 55618 / DSM 22257 / CCUG 43843 / 130Z).